Reading from the N-terminus, the 145-residue chain is D-aminoacyl-tRNA deacylase (145 aa).

Residues G137–P138 carry the Gly-cisPro motif, important for rejection of L-amino acids motif.

The protein belongs to the DTD family. As to quaternary structure, homodimer.

It is found in the cytoplasm. The enzyme catalyses glycyl-tRNA(Ala) + H2O = tRNA(Ala) + glycine + H(+). It carries out the reaction a D-aminoacyl-tRNA + H2O = a tRNA + a D-alpha-amino acid + H(+). Functionally, an aminoacyl-tRNA editing enzyme that deacylates mischarged D-aminoacyl-tRNAs. Also deacylates mischarged glycyl-tRNA(Ala), protecting cells against glycine mischarging by AlaRS. Acts via tRNA-based rather than protein-based catalysis; rejects L-amino acids rather than detecting D-amino acids in the active site. By recycling D-aminoacyl-tRNA to D-amino acids and free tRNA molecules, this enzyme counteracts the toxicity associated with the formation of D-aminoacyl-tRNA entities in vivo and helps enforce protein L-homochirality. In Proteus mirabilis (strain HI4320), this protein is D-aminoacyl-tRNA deacylase.